The primary structure comprises 106 residues: Thioredoxin (106 aa).

Lysine 3 carries the N6-acetyllysine modification. Positions 3–106 constitute a Thioredoxin domain; that stretch reads KQIESKTAFQ…KLEATINELV (104 aa). N6-succinyllysine is present on lysine 8. Residues cysteine 32 and cysteine 35 each act as nucleophile in the active site. Cysteine 32 and cysteine 35 are disulfide-bonded. Lysine 39 carries the N6-acetyllysine modification. Residues cysteine 62 and cysteine 69 each carry the S-nitrosocysteine modification. At cysteine 73 the chain carries S-nitrosocysteine; alternate. Lysine 95 is subject to N6-acetyllysine; alternate. Position 95 is an N6-succinyllysine; alternate (lysine 95).

This sequence belongs to the thioredoxin family. As to quaternary structure, homodimer; disulfide-linked. Interacts with TXNIP through the redox-active site. Interacts with MAP3K5 and CASP3. Interacts with APEX1; the interaction stimulates the FOS/JUN AP-1 DNA-binding activity in a redox-dependent manner. In terms of processing, in the fully reduced protein, both Cys-69 and Cys-73 are nitrosylated in response to nitric oxide (NO). When two disulfide bonds are present in the protein, only Cys-73 is nitrosylated. Cys-73 can serve as donor for nitrosylation of target proteins.

The protein resides in the nucleus. It is found in the cytoplasm. The protein localises to the secreted. Functionally, participates in various redox reactions through the reversible oxidation of its active center dithiol to a disulfide and catalyzes dithiol-disulfide exchange reactions. Plays a role in the reversible S-nitrosylation of cysteine residues in target proteins, and thereby contributes to the response to intracellular nitric oxide. Nitrosylates the active site Cys of CASP3 in response to nitric oxide (NO), and thereby inhibits caspase-3 activity. Induces the FOS/JUN AP-1 DNA binding activity in ionizing radiation (IR) cells through its oxidation/reduction status and stimulates AP-1 transcriptional activity. The sequence is that of Thioredoxin (TXN) from Pongo abelii (Sumatran orangutan).